A 178-amino-acid chain; its full sequence is Probable chorismate pyruvate-lyase (178 aa).

Residues arginine 72, leucine 110, and glutamate 169 each coordinate substrate.

It belongs to the UbiC family.

The protein localises to the cytoplasm. It catalyses the reaction chorismate = 4-hydroxybenzoate + pyruvate. It functions in the pathway cofactor biosynthesis; ubiquinone biosynthesis. In terms of biological role, removes the pyruvyl group from chorismate, with concomitant aromatization of the ring, to provide 4-hydroxybenzoate (4HB) for the ubiquinone pathway. This chain is Probable chorismate pyruvate-lyase, found in Nitrosomonas europaea (strain ATCC 19718 / CIP 103999 / KCTC 2705 / NBRC 14298).